Consider the following 109-residue polypeptide: Hainantoxin-XVIII-5 (109 aa).

The N-terminal stretch at 1–18 is a signal peptide; sequence MKLSIIIIATSLVIAVVA. Positions 19 to 46 are excised as a propeptide; that stretch reads FPSKDSKAIENDKTEQRMEIVVQETARA. 4 disulfides stabilise this stretch: Cys-47–Cys-62, Cys-55–Cys-68, Cys-59–Cys-108, and Cys-61–Cys-81.

Belongs to the neurotoxin 25 family. F7 subfamily. In terms of tissue distribution, expressed by the venom gland.

The protein resides in the secreted. Putative ion channel inhibitor. In Cyriopagopus hainanus (Chinese bird spider), this protein is Hainantoxin-XVIII-5.